Consider the following 324-residue polypeptide: Biotin synthase (324 aa).

The region spanning 50–278 is the Radical SAM core domain; the sequence is HAGPAFTCAI…QADILVAGGR (229 aa). [4Fe-4S] cluster contacts are provided by C67, C71, and C74. Positions 143 and 203 each coordinate [2Fe-2S] cluster.

Belongs to the radical SAM superfamily. Biotin synthase family. In terms of assembly, homodimer. Requires [4Fe-4S] cluster as cofactor. [2Fe-2S] cluster serves as cofactor.

It catalyses the reaction (4R,5S)-dethiobiotin + (sulfur carrier)-SH + 2 reduced [2Fe-2S]-[ferredoxin] + 2 S-adenosyl-L-methionine = (sulfur carrier)-H + biotin + 2 5'-deoxyadenosine + 2 L-methionine + 2 oxidized [2Fe-2S]-[ferredoxin]. The protein operates within cofactor biosynthesis; biotin biosynthesis; biotin from 7,8-diaminononanoate: step 2/2. Catalyzes the conversion of dethiobiotin (DTB) to biotin by the insertion of a sulfur atom into dethiobiotin via a radical-based mechanism. This Oleidesulfovibrio alaskensis (strain ATCC BAA-1058 / DSM 17464 / G20) (Desulfovibrio alaskensis) protein is Biotin synthase.